The chain runs to 237 residues: Cysteine-rich venom protein DIS2 (237 aa).

The first 18 residues, 1–18, serve as a signal peptide directing secretion; that stretch reads MFVFILLSLAAVLQQSFG. Residues 37–165 enclose the SCP domain; the sequence is VDKHNAFRRS…SYNYFYVCQY (129 aa). 7 cysteine pairs are disulfide-bonded: Cys-74–Cys-152, Cys-91–Cys-166, Cys-147–Cys-163, Cys-185–Cys-192, Cys-188–Cys-197, Cys-201–Cys-234, and Cys-219–Cys-232. The 34-residue stretch at 201-234 folds into the ShKT domain; the sequence is CSREDVFMNCKSLVAQSNCQDDYIRKNCPATCFC.

Belongs to the CRISP family. In terms of tissue distribution, expressed by the venom gland.

It localises to the secreted. Weakly blocks contraction of smooth muscle elicited by high potassium-induced depolarization, but does not block caffeine-stimulated contraction. May target voltage-gated calcium channels on smooth muscle. This Dispholidus typus (Boomslang) protein is Cysteine-rich venom protein DIS2.